Consider the following 156-residue polypeptide: Small ribosomal subunit protein uS11 (156 aa).

The interval 1–27 (MSEKEQKEVEAKESSGKAEERRETREK) is disordered.

Belongs to the universal ribosomal protein uS11 family. In terms of assembly, part of the 30S ribosomal subunit.

Functionally, located on the platform of the 30S subunit. In Thermofilum pendens (strain DSM 2475 / Hrk 5), this protein is Small ribosomal subunit protein uS11.